A 164-amino-acid polypeptide reads, in one-letter code: Protein phosphatase 1 regulatory subunit 14C (164 aa).

The segment covering 1–19 (MSVVTGGGEAAGGGGGGGA) has biased composition (gly residues). A disordered region spans residues 1–70 (MSVVTGGGEA…QQQRRHQQGK (70 aa)). Serine 2 is modified (N-acetylserine). The residue at position 25 (serine 25) is a Phosphoserine. Residue arginine 27 is modified to Omega-N-methylarginine. Serine 33 is subject to Phosphoserine. Low complexity predominate over residues 50–62 (VTTVAAAGQVQQQ). Threonine 72 is modified (phosphothreonine; by ILK1).

The protein belongs to the PP1 inhibitor family. In terms of processing, the main inhibitory site appears to be Thr-72. Has over 600-fold higher inhibitory activity when phosphorylated, creating a molecular switch for regulating the phosphorylation status of PPP1CA substrates and smooth muscle contraction. In terms of tissue distribution, detected in heart, muscle, spinal cord, hippocampus, hypothalamus, thalamus, midbrain, brain stem, cerebellum, brain cortex and olfactory bulb.

It localises to the endomembrane system. Inhibitor of the PP1 regulatory subunit PPP1CA. This Mus musculus (Mouse) protein is Protein phosphatase 1 regulatory subunit 14C (Ppp1r14c).